Reading from the N-terminus, the 112-residue chain is Probable small nuclear ribonucleoprotein Sm D2 (112 aa).

A compositionally biased stretch (basic and acidic residues) spans 1–15 (MSRMNDETMEDKPDD). The disordered stretch occupies residues 1–23 (MSRMNDETMEDKPDDSNGPLSIL). A Sm domain is found at 20–106 (LSILMDSVNN…VILVLKNPLG (87 aa)).

The protein belongs to the snRNP core protein family.

It localises to the nucleus. It is found in the cytoplasm. The protein resides in the cytosol. Plays a role in pre-mRNA splicing as a core component of the spliceosomal U1, U2, U4 and U5 small nuclear ribonucleoproteins (snRNPs), the building blocks of the spliceosome. In Dictyostelium discoideum (Social amoeba), this protein is Probable small nuclear ribonucleoprotein Sm D2 (snrpd2).